Here is a 505-residue protein sequence, read N- to C-terminus: ATP synthase subunit alpha (505 aa).

169–176 (GDRQTGKT) contributes to the ATP binding site.

The protein belongs to the ATPase alpha/beta chains family. In terms of assembly, F-type ATPases have 2 components, CF(1) - the catalytic core - and CF(0) - the membrane proton channel. CF(1) has five subunits: alpha(3), beta(3), gamma(1), delta(1), epsilon(1). CF(0) has three main subunits: a(1), b(2) and c(9-12). The alpha and beta chains form an alternating ring which encloses part of the gamma chain. CF(1) is attached to CF(0) by a central stalk formed by the gamma and epsilon chains, while a peripheral stalk is formed by the delta and b chains.

Its subcellular location is the cell membrane. The enzyme catalyses ATP + H2O + 4 H(+)(in) = ADP + phosphate + 5 H(+)(out). Functionally, produces ATP from ADP in the presence of a proton gradient across the membrane. The alpha chain is a regulatory subunit. The protein is ATP synthase subunit alpha of Alkaliphilus metalliredigens (strain QYMF).